Consider the following 220-residue polypeptide: Zinc-finger homeodomain protein 2 (220 aa).

Acidic residues predominate over residues 1–11 (MNFEDQEEDME). The tract at residues 1 to 40 (MNFEDQEEDMEMSGVNPPCGYDSLSGEGATSSGGGGVGRS) is disordered. Gly residues predominate over residues 31-40 (SSGGGGVGRS). Residues 49-98 (YRECLKNHAVNIGGHAVDGCCEFMPSGEDGTLDALKCAACGCHRNFHRKE) form a ZF-HD dimerization-type zinc finger. The tract at residues 100–160 (ESIGGRAHRV…SSSGGTTKRF (61 aa)) is disordered. The homeobox; atypical DNA-binding region spans 157–220 (TKRFRTKFTA…NNKNSLGKKP (64 aa)).

Homo or heterodimer. Interacts with ZHD1, ZHD3, ZHD4, ZHD5, ZHD6, ZHD7, ZHD8, ZHD9, ZHD10 and ZHD11. As to expression, mostly expressed in flowers and, to a lower extent, in inflorescence, stems and leaves.

The protein resides in the nucleus. Functionally, essential protein. Putative transcription factor. The polypeptide is Zinc-finger homeodomain protein 2 (ZHD1) (Arabidopsis thaliana (Mouse-ear cress)).